Here is a 297-residue protein sequence, read N- to C-terminus: ATP synthase subunit gamma, mitochondrial (297 aa).

It belongs to the ATPase gamma chain family. F-type ATPases have 2 components, CF(1) - the catalytic core - and CF(0) - the membrane proton channel. CF(1) has five subunits: alpha(3), beta(3), gamma(1), delta(1), epsilon(1). CF(0) has three main subunits: a, b and c.

It localises to the mitochondrion. The protein resides in the mitochondrion inner membrane. In terms of biological role, mitochondrial membrane ATP synthase (F(1)F(0) ATP synthase or Complex V) produces ATP from ADP in the presence of a proton gradient across the membrane which is generated by electron transport complexes of the respiratory chain. F-type ATPases consist of two structural domains, F(1) - containing the extramembraneous catalytic core, and F(0) - containing the membrane proton channel, linked together by a central stalk and a peripheral stalk. During catalysis, ATP synthesis in the catalytic domain of F(1) is coupled via a rotary mechanism of the central stalk subunits to proton translocation. Part of the complex F(1) domain and the central stalk which is part of the complex rotary element. The gamma subunit protrudes into the catalytic domain formed of alpha(3)beta(3). Rotation of the central stalk against the surrounding alpha(3)beta(3) subunits leads to hydrolysis of ATP in three separate catalytic sites on the beta subunits. This Drosophila melanogaster (Fruit fly) protein is ATP synthase subunit gamma, mitochondrial.